A 284-amino-acid polypeptide reads, in one-letter code: tRNA pseudouridine synthase A (284 aa).

Residue Asp62 is the Nucleophile of the active site. Tyr123 lines the substrate pocket.

Belongs to the tRNA pseudouridine synthase TruA family. Homodimer.

It carries out the reaction uridine(38/39/40) in tRNA = pseudouridine(38/39/40) in tRNA. In terms of biological role, formation of pseudouridine at positions 38, 39 and 40 in the anticodon stem and loop of transfer RNAs. The sequence is that of tRNA pseudouridine synthase A from Streptomyces griseus subsp. griseus (strain JCM 4626 / CBS 651.72 / NBRC 13350 / KCC S-0626 / ISP 5235).